Reading from the N-terminus, the 264-residue chain is Polyneuridine aldehyde esterase (264 aa).

Positions 1–6 (MHSAAN) are excised as a propeptide. Residues 12-122 (HFVLVHGGCL…MMPDPNHSLT (111 aa)) enclose the AB hydrolase-1 domain. Catalysis depends on residues Ser-87, Asp-216, and His-244. Ser-87 provides a ligand contact to 16-epivellosimine.

It belongs to the AB hydrolase superfamily. Homodimer; homodimerizes in aqueous solutions at pH 7.0. Mainly expressed in roots and, to a lower level, in leaves.

It catalyses the reaction polyneuridine aldehyde + H2O = 16-epivellosimine + methanol + CO2. It functions in the pathway alkaloid biosynthesis; ajmaline biosynthesis. Its activity is regulated as follows. Inhibited by DEPC and HgCl(2). In terms of biological role, hydrolase involved in the biosynthesis of ajmaline-type monoterpenoid indole alkaloids (MIAs) natural products, important plant-derived pharmaceuticals used in the therapy of heart disorders. Catalyzes the hydrolysis of polyneuridine aldehyde into epi-vellosimine, precursor of vomilenine, an intermediate chemical in the biosynthesis of ajmaline. The sequence is that of Polyneuridine aldehyde esterase from Rauvolfia serpentina (Serpentine wood).